Reading from the N-terminus, the 765-residue chain is Periplasmic beta-glucosidase (765 aa).

A signal peptide spans 1–20; it reads MKWLCSVGVAVSLAMQPALA. Asp-287 is an active-site residue.

Belongs to the glycosyl hydrolase 3 family.

Its subcellular location is the periplasm. It carries out the reaction Hydrolysis of terminal, non-reducing beta-D-glucosyl residues with release of beta-D-glucose.. In Salmonella typhimurium (strain LT2 / SGSC1412 / ATCC 700720), this protein is Periplasmic beta-glucosidase (bglX).